Here is a 1390-residue protein sequence, read N- to C-terminus: MEVLMAERANLVFHNKVIDGTAMKRLISRLIDHFGMAYTSHILDQVKTLGFQQATATSISLGIDDLLTIPSKRWLVQDAEEQSFILEKHHHSGNVHAVEKLRQSIEIWYATSEFLRQEMNPNFRMTDPFNPVHIMSFSGARGNASQVHQLVGMRGLMSDPQGQMIDLPIQSNLREGLSLTEYIISCYGARKGVVDTAVRTSDAGYLTRRLVEVVQHIVVRRKDCGTARGISVSLGNGMMSENIFIQTLIGRVLADDIYMGTRCIATRNQDIGSGLVNQFITFRAQPIYIRTPFTCRSTSWICQLCYGRSPTHGDLVELGEAVGIIAGQSIGEPGTQLTLRTFHTGGVFTGGIAEHVRAPSNGKIKFNEDLVHPTRTRHGHPAFVCSIDLYVTIESEDILHNVNIPPKSFLLVQNDQYVESEQVIAEIRAGTSTLNFKEKVRKHIYSDSEGEMHWNTDVYHAPEFTYGNVHLLPKTSHLWILLGEPRRSDLISLSIHKDQDQMNARSFSVKKRSISNLSVTNDQVRHKFFSSDFFGKKEEEHPDYSELNRIVRCNLRYPTIPYADYDLLAKRRRKRFIIPLQSIQERENELMPPSGISIEIPINGIFRINSILAFFDDPRYRRKSSGITKYGTIEVDPIAKKEDLIEYRGVKEFKPKYQIKVDRFFFIPEEMHILPGSSSIMVRNNSIIGIDTQIALTTRSRVGGLVRVEIKKKRIELKIFSGDIHFPGETDKISRHSGVLIPPGTGKTNSKESKKGKNWIYVQRITPTNKKYFVLVRPVVTYEITDGINLVRLFPPDLLQEMDNVQLRVVNYILYGNGKPIREIYNTSIQLVRTCLVLNCTQDKKSSYIEETRTSFVEIGINGLSRDFIKIDLVKSPISYTAKRNDPSRSGLIYENGSDCTNINPFSSRFFYYSNARIKESLNQNQGTIHTLFNRNKEYQSLIILSSSNCFRMGPFNNVKYHNVIKESIKKDPPIPIRNLLGPLGTALKTANFYPFSHLITYNQILVINYLQLDNLKQTFQVIKYFLMDEIGKIYNYDLCSNIILNPFNLNWYFLQHNYCEGMSTIMSLGQFICENVCIAKNGPHLKSGQVLIVKMDSVVIRSAKPYLATPGATVHGHYGEILYEGDTLVTFIYEKSRSGDITQGLPKVEQVLEVRSIDSISMNLEKRVEGWHECITRTLGIPWGFLIGAELTIVQSRIALVNKIQKVYRSQGVQIHNRHIEIIVRQITSKVLVSEDGMSNVFLPGELIGLLRAERMGRALEEAICYRAVLLGITKASLNTQSFISEASFQETARVLAKAALRGRIDWLKGLKENVVLGGMIPVGTGFEGLVHSSRQHTNLSLETKNNNIFEGEMRDILFHHRKFFDSCFSKNFHDTSEQSFIGIGFNDS.

C224, C295, C302, and C305 together coordinate Zn(2+).

It belongs to the RNA polymerase beta' chain family. RpoC2 subfamily. In plastids the minimal PEP RNA polymerase catalytic core is composed of four subunits: alpha, beta, beta', and beta''. When a (nuclear-encoded) sigma factor is associated with the core the holoenzyme is formed, which can initiate transcription. Zn(2+) is required as a cofactor.

It localises to the plastid. The protein resides in the chloroplast. It catalyses the reaction RNA(n) + a ribonucleoside 5'-triphosphate = RNA(n+1) + diphosphate. Its function is as follows. DNA-dependent RNA polymerase catalyzes the transcription of DNA into RNA using the four ribonucleoside triphosphates as substrates. This Daucus carota (Wild carrot) protein is DNA-directed RNA polymerase subunit beta''.